The following is a 23-amino-acid chain: Potassium channel toxin kappa-KTx 1.3 (23 aa).

2 disulfides stabilise this stretch: C4/C22 and C8/C18.

The protein belongs to the short scorpion toxin superfamily. Potassium channel inhibitor kappa-KTx family. Kappa-KTx 1 subfamily. As to quaternary structure, monomer. Is not amidated. As to expression, expressed by the venom gland.

The protein resides in the secreted. Functionally, shows very weak blocking activity on voltage-gated potassium channels Kv10.1/KCNH1/EAG1 (6.2% inhibition by 40 uM of the toxin). Has no effect on the other voltage-gated potassium channels tested. The polypeptide is Potassium channel toxin kappa-KTx 1.3 (Heterometrus spinifer (Asia giant forest scorpion)).